Consider the following 445-residue polypeptide: Selenocysteine lyase (445 aa).

N-acetylmethionine is present on M1. Residues 1-28 (MEAAVAPGRDAPAPAASQPSGCGKHNSP) form a disordered region. S129 carries the post-translational modification Phosphoserine. An N6-(pyridoxal phosphate)lysine modification is found at K259. Catalysis depends on C388, which acts as the S-selanylcysteine intermediate.

This sequence belongs to the class-V pyridoxal-phosphate-dependent aminotransferase family. Homodimer. Requires pyridoxal 5'-phosphate as cofactor.

It is found in the cytoplasm. The protein resides in the cytosol. It carries out the reaction L-selenocysteine + AH2 = hydrogenselenide + L-alanine + A + H(+). Catalyzes the decomposition of L-selenocysteine to L-alanine and elemental selenium. The polypeptide is Selenocysteine lyase (SCLY) (Homo sapiens (Human)).